A 431-amino-acid chain; its full sequence is MASFLHNFLLFFCSLSLIILTSSATKSQTHVPIRPNKLVLKVQKDRATNLHVVQIHKRTPLVQFPFVIDLTGRFLSVNCENQYTSSTYKAPVCHSSQCARANSHTCRTCSSSKTRPGCHTNACGLLTTNPVTQQSAQGELAEDVLKIPSTQGSSPGPMVTYPHFLFACAPSNILQKGLPKNVQGVAGLGHSPISLPYQLASHFGFPPKFAVCLTSSPGKNGAVFFGEGPYFMKPGIDVSRQLTYAPFTIGQQGEYYINVQSFKINNAMLPSIPKGGFGGAMISTTTPYTTLQTPIFRALNQLFMNQLRGVPHVKPVAPFGACFDANRIPTSKMGPTVPSIDLVLDNKKNIMWRIFGANAMIQPRPGVMCLAFVDGGMRPKAPIVIGTQQLEDNLLQFDLMNSRLGFSSSLLFRRTNCANFNFGTSSTNTDP.

Residues 1–24 form the signal peptide; sequence MASFLHNFLLFFCSLSLIILTSSA. Residues 51–407 enclose the Peptidase A1 domain; the sequence is HVVQIHKRTP…DLMNSRLGFS (357 aa). 5 cysteine pairs are disulfide-bonded: Cys-79–Cys-168, Cys-93–Cys-106, Cys-98–Cys-123, Cys-109–Cys-118, and Cys-322–Cys-369.

This sequence belongs to the peptidase A1 family. In terms of assembly, two-subunit monomeric unit made of alpha and beta subunits coupled by disulfide bonds (at pH 4.5 and under non-reducing conditions). Monomeric alpha and beta subunits in reducing conditions. Can also form oligomers including dimer, tetramer and cyclic hexamer (trimer of dimers) (at pH &gt; 5.5). Component of globulins complexes which accumulate in seeds. Interacts with flavonoids (e.g. apigenin glucosides) present in globulins complexes.

The protein resides in the secreted. It is found in the extracellular space. Sulfur-rich seed storage protein that remains undegraded at germination. This chain is Gamma conglutin 1, found in Prunus dulcis (Almond).